The primary structure comprises 736 residues: Probable beta-glucosidase L (736 aa).

Residues 1–21 (MNYRVPSLKATALAMAALTQA) form the signal peptide. An N-linked (GlcNAc...) asparagine glycan is attached at Asn-224. The active site involves Asp-252. N-linked (GlcNAc...) asparagine glycosylation is found at Asn-295, Asn-363, Asn-429, and Asn-607.

This sequence belongs to the glycosyl hydrolase 3 family.

The protein resides in the secreted. It catalyses the reaction Hydrolysis of terminal, non-reducing beta-D-glucosyl residues with release of beta-D-glucose.. It participates in glycan metabolism; cellulose degradation. Functionally, beta-glucosidases are one of a number of cellulolytic enzymes involved in the degradation of cellulosic biomass. Catalyzes the last step releasing glucose from the inhibitory cellobiose. The polypeptide is Probable beta-glucosidase L (bglL) (Aspergillus terreus (strain NIH 2624 / FGSC A1156)).